The sequence spans 359 residues: 3-isopropylmalate dehydrogenase (359 aa).

Position 77 to 88 (77 to 88 (GPKWGTGDVRPE)) interacts with NAD(+). 4 residues coordinate substrate: Arg95, Arg105, Arg134, and Asp223. 3 residues coordinate Mg(2+): Asp223, Asp248, and Asp252. 287–298 (GSAPDLPAGKVN) serves as a coordination point for NAD(+).

This sequence belongs to the isocitrate and isopropylmalate dehydrogenases family. As to quaternary structure, homodimer. It depends on Mg(2+) as a cofactor. Requires Mn(2+) as cofactor.

The protein localises to the cytoplasm. It carries out the reaction (2R,3S)-3-isopropylmalate + NAD(+) = 4-methyl-2-oxopentanoate + CO2 + NADH. Its pathway is amino-acid biosynthesis; L-leucine biosynthesis; L-leucine from 3-methyl-2-oxobutanoate: step 3/4. Its function is as follows. Catalyzes the oxidation of 3-carboxy-2-hydroxy-4-methylpentanoate (3-isopropylmalate) to 3-carboxy-4-methyl-2-oxopentanoate. The product decarboxylates to 4-methyl-2 oxopentanoate. This Diutina rugosa (Yeast) protein is 3-isopropylmalate dehydrogenase (LEU2).